Here is a 156-residue protein sequence, read N- to C-terminus: Deoxyuridine 5'-triphosphate nucleotidohydrolase (156 aa).

Substrate contacts are provided by residues 76–78 (RSG), Asn89, 93–95 (TVD), and Lys103.

The protein belongs to the dUTPase family. Requires Mg(2+) as cofactor.

It catalyses the reaction dUTP + H2O = dUMP + diphosphate + H(+). Its pathway is pyrimidine metabolism; dUMP biosynthesis; dUMP from dCTP (dUTP route): step 2/2. In terms of biological role, this enzyme is involved in nucleotide metabolism: it produces dUMP, the immediate precursor of thymidine nucleotides and it decreases the intracellular concentration of dUTP so that uracil cannot be incorporated into DNA. This is Deoxyuridine 5'-triphosphate nucleotidohydrolase from Rhizobium etli (strain CIAT 652).